Here is a 162-residue protein sequence, read N- to C-terminus: MTLTVDIEIEDEAWTKAEPEVEALVWRAAQAVLDAHEDIEGHGIVILLADDDSVQTLNRDFRQKDYATNVLSFPSVTSPGANPEGQIGDIALAFGVCQREAAEQGKSLAHHLQHLVAHGVLHLLGYDHQDDADAEAMEAFEREILAGLDIPDPYAEPASAEG.

Zn(2+)-binding residues include His-118, His-122, and His-128.

Belongs to the endoribonuclease YbeY family. It depends on Zn(2+) as a cofactor.

The protein localises to the cytoplasm. Single strand-specific metallo-endoribonuclease involved in late-stage 70S ribosome quality control and in maturation of the 3' terminus of the 16S rRNA. The polypeptide is Endoribonuclease YbeY (Caulobacter sp. (strain K31)).